Consider the following 114-residue polypeptide: Ribonuclease P protein component (114 aa).

Belongs to the RnpA family. As to quaternary structure, consists of a catalytic RNA component (M1 or rnpB) and a protein subunit.

It catalyses the reaction Endonucleolytic cleavage of RNA, removing 5'-extranucleotides from tRNA precursor.. In terms of biological role, RNaseP catalyzes the removal of the 5'-leader sequence from pre-tRNA to produce the mature 5'-terminus. It can also cleave other RNA substrates such as 4.5S RNA. The protein component plays an auxiliary but essential role in vivo by binding to the 5'-leader sequence and broadening the substrate specificity of the ribozyme. In Alkaliphilus oremlandii (strain OhILAs) (Clostridium oremlandii (strain OhILAs)), this protein is Ribonuclease P protein component.